A 253-amino-acid chain; its full sequence is Cholesterol ring-cleaving hydrolase IpdB subunit (253 aa).

The protein belongs to the 3-oxoacid CoA-transferase subunit B family. As to quaternary structure, heterotetramer composed of 2 IpdA subunits and 2 IpdB subunits.

It carries out the reaction (3E)-2-(2-carboxylatoethyl)-3-methyl-6-oxocyclohex-1-ene-1-carboxyl-CoA + H2O = 6-methyl-3,7-dioxodecanedioyl-CoA. The protein operates within steroid metabolism; cholesterol degradation. Functionally, involved in the final steps of cholesterol and steroid degradation. Opens the last steroid ring of cholesterol by catalyzing the hydrolysis of (3E)-2-(2-carboxylatoethyl)-3-methyl-6-oxocyclohex-1-ene-1-carboxyl-CoA (COCHEA-CoA) to 6-methyl-3,7-dioxodecanedioyl-CoA (MeDODA-CoA). This chain is Cholesterol ring-cleaving hydrolase IpdB subunit, found in Rhodococcus jostii (strain RHA1).